The sequence spans 232 residues: Large ribosomal subunit protein uL1 (232 aa).

Belongs to the universal ribosomal protein uL1 family. Part of the 50S ribosomal subunit.

In terms of biological role, binds directly to 23S rRNA. The L1 stalk is quite mobile in the ribosome, and is involved in E site tRNA release. Protein L1 is also a translational repressor protein, it controls the translation of the L11 operon by binding to its mRNA. This Levilactobacillus brevis (strain ATCC 367 / BCRC 12310 / CIP 105137 / JCM 1170 / LMG 11437 / NCIMB 947 / NCTC 947) (Lactobacillus brevis) protein is Large ribosomal subunit protein uL1.